An 862-amino-acid chain; its full sequence is Active breakpoint cluster region-related protein (862 aa).

A disordered region spans residues 30–84 (DAEGNEEHKSSREGSETMPYIDESPTMSPQLSARSQDSVDGVSPTPTEVLLPGGE). Residues 34-44 (NEEHKSSREGS) show a composition bias toward basic and acidic residues. Residues 54-67 (PTMSPQLSARSQDS) show a composition bias toward polar residues. Positions 93–286 (MRKLVLSGVL…QNFLSSINED (194 aa)) constitute a DH domain. The 160-residue stretch at 303-462 (QLVKDGFLVE…WREAIQKLQK (160 aa)) folds into the PH domain. The 129-residue stretch at 488–616 (VHNVPIISHK…QSKNWHDDVI (129 aa)) folds into the C2 domain. One can recognise a Rho-GAP domain in the interval 650–848 (VKISVVTKRE…YYLQHPPISF (199 aa)).

Its subcellular location is the cell projection. The protein resides in the dendritic spine. It is found in the axon. It localises to the synapse. Functionally, protein with a unique structure having two opposing regulatory activities toward small GTP-binding proteins. The C-terminus is a GTPase-activating protein domain which stimulates GTP hydrolysis by RAC1, RAC2 and CDC42. Accelerates the intrinsic rate of GTP hydrolysis of RAC1 or CDC42, leading to down-regulation of the active GTP-bound form. The central Dbl homology (DH) domain functions as guanine nucleotide exchange factor (GEF) that modulates the GTPases CDC42, RHOA and RAC1. Promotes the conversion of CDC42, RHOA and RAC1 from the GDP-bound to the GTP-bound form. This is Active breakpoint cluster region-related protein (abr) from Xenopus tropicalis (Western clawed frog).